Consider the following 357-residue polypeptide: DNA primase small subunit PriS (357 aa).

Active-site residues include aspartate 105, aspartate 107, and aspartate 259.

The protein belongs to the eukaryotic-type primase small subunit family. In terms of assembly, heterodimer of a small subunit (PriS) and a large subunit (PriL). Requires Mg(2+) as cofactor. Mn(2+) serves as cofactor.

Functionally, catalytic subunit of DNA primase, an RNA polymerase that catalyzes the synthesis of short RNA molecules used as primers for DNA polymerase during DNA replication. The small subunit contains the primase catalytic core and has DNA synthesis activity on its own. Binding to the large subunit stabilizes and modulates the activity, increasing the rate of DNA synthesis while decreasing the length of the DNA fragments, and conferring RNA synthesis capability. The DNA polymerase activity may enable DNA primase to also catalyze primer extension after primer synthesis. May also play a role in DNA repair. The polypeptide is DNA primase small subunit PriS (Methanococcus maripaludis (strain C5 / ATCC BAA-1333)).